A 633-amino-acid chain; its full sequence is tRNA uridine 5-carboxymethylaminomethyl modification enzyme MnmG (633 aa).

Gly13–Gly18 lines the FAD pocket. Residue Gly273–Phe287 coordinates NAD(+).

The protein belongs to the MnmG family. As to quaternary structure, homodimer. Heterotetramer of two MnmE and two MnmG subunits. FAD serves as cofactor.

The protein localises to the cytoplasm. NAD-binding protein involved in the addition of a carboxymethylaminomethyl (cmnm) group at the wobble position (U34) of certain tRNAs, forming tRNA-cmnm(5)s(2)U34. The polypeptide is tRNA uridine 5-carboxymethylaminomethyl modification enzyme MnmG (Pseudoalteromonas atlantica (strain T6c / ATCC BAA-1087)).